The sequence spans 98 residues: Integration host factor subunit alpha (98 aa).

This sequence belongs to the bacterial histone-like protein family. As to quaternary structure, heterodimer of an alpha and a beta chain.

This protein is one of the two subunits of integration host factor, a specific DNA-binding protein that functions in genetic recombination as well as in transcriptional and translational control. The sequence is that of Integration host factor subunit alpha from Mannheimia succiniciproducens (strain KCTC 0769BP / MBEL55E).